We begin with the raw amino-acid sequence, 1025 residues long: Myosin phosphatase Rho-interacting protein (1025 aa).

The interval 2 to 383 (SAAKENPCRK…DRRSTEPSVT (382 aa)) is interaction with F-actin. The PH 1 domain maps to 43–150 (KPIYGGWLLL…WLEMLMVYPR (108 aa)). 2 disordered regions span residues 152-302 (NKQN…RRSQ) and 317-383 (HMET…PSVT). Positions 179-189 (SSSSSSSSSSS) are enriched in low complexity. Serine 192, serine 217, serine 218, serine 220, serine 224, and serine 226 each carry phosphoserine. Residues 217–236 (SSLSPAQSPSQSQPPAASSL) are compositionally biased toward low complexity. Over residues 239 to 263 (PGLESKEEESAMSSDRMDCGRKVRV) the composition is skewed to basic and acidic residues. A phosphoserine mark is found at serine 265 and serine 269. A compositionally biased stretch (basic and acidic residues) spans 271-281 (EKTKQDLKAEE). The span at 284-294 (LPPPLSPPSPS) shows a compositional bias: pro residues. Phosphoserine is present on residues serine 289 and serine 292. Residue threonine 295 is modified to Phosphothreonine. A Phosphoserine modification is found at serine 326. A compositionally biased stretch (basic and acidic residues) spans 332–348 (RQGRSEKRAFPRKRDFT). Phosphothreonine is present on threonine 348. Serine 362 and serine 365 each carry phosphoserine. Residues 387–483 (LNFKKGWLTK…WIQTIMKHVH (97 aa)) form the PH 2 domain. 2 disordered regions span residues 485–545 (TTAP…TFDW) and 560–591 (VGGVGPADTHEPLRPEAEPGELERERARRREE). Serine 493 carries the phosphoserine modification. 2 stretches are compositionally biased toward basic and acidic residues: residues 524–545 (PEQKRSRARERRREGRSKTFDW) and 567–589 (DTHEPLRPEAEPGELERERARRR). The tract at residues 546-824 (AEFRPIQQAL…SVQRELEVLS (279 aa)) is interaction with RHOA. The residue at position 619 (serine 619) is a Phosphoserine. At threonine 646 the chain carries Phosphothreonine. A phosphoserine mark is found at serine 663 and serine 800. A coiled-coil region spans residues 673 to 977 (HELTSLLEKE…AATEALGEKS (305 aa)). Residues 824–879 (SEQYSQKCLENAHLAQALEAERQALRQCQRENQELNAHNQELNNRLAAEITRLRTL) are interaction with PPP1R12A. Phosphoserine occurs at positions 891, 977, 993, 1014, and 1016.

In terms of assembly, binds F-actin through its N-terminus. Interacts with MYZAP. Binds RHOA, PPP1R12A/MBS and PPP1R12C/MBS85 through adjacent coiled coil domains.

It localises to the cytoplasm. Its subcellular location is the cytoskeleton. Its function is as follows. Targets myosin phosphatase to the actin cytoskeleton. Required for the regulation of the actin cytoskeleton by RhoA and ROCK1. Depletion leads to an increased number of stress fibers in smooth muscle cells through stabilization of actin fibers by phosphorylated myosin. Overexpression of MRIP as well as its F-actin-binding region leads to disassembly of stress fibers in neuronal cells. This chain is Myosin phosphatase Rho-interacting protein (MPRIP), found in Homo sapiens (Human).